The primary structure comprises 396 residues: MKTLLLLLLVLLELGEAQGSLHRVPLRRHPSLKKKLRARSQLSEFWKSHNLDMIQFTESCSMDQSAKEPLINYLDMEYFGTISIGSPPQNFTVIFDTGSSNLWVPSVYCTSPACKTHSRFQPSQSSTYSQPGQSFSIQYGTGSLSGIIGADQVSVEGLTVVGQQFGESVTEPGQTFVDAEFDGILGLGYPSLAVGGVTPVFDNMMAQNLVDLPMFSVYMSSNPEGGAGSELIFGGYDHSHFSGSLNWVPVTKQAYWQIALDNIQVGGTVMFCSEGCQAIVDTGTSLITGPSDKIKQLQNAIGAAPVDGEYAVECANLNVMPDVTFTINGVPYTLSPTAYTLLDFVDGMQFCSSGFQGLDIHPPAGPLWILGDVFIRQFYSVFDRGNNRVGLAPAVP.

The first 19 residues, 1-19 (MKTLLLLLLVLLELGEAQG), serve as a signal peptide directing secretion. Residues 20–53 (SLHRVPLRRHPSLKKKLRARSQLSEFWKSHNLDM) constitute a propeptide, activation peptide. The 319-residue stretch at 78 to 396 (YFGTISIGSP…NRVGLAPAVP (319 aa)) folds into the Peptidase A1 domain. Asn-90 carries an N-linked (GlcNAc...) asparagine glycan. Asp-96 is an active-site residue. Disulfide bonds link Cys-109–Cys-114 and Cys-272–Cys-276. The active site involves Asp-281. Cys-314 and Cys-351 are disulfide-bonded.

The protein belongs to the peptidase A1 family. As to quaternary structure, homodimer; disulfide-linked. Glycosylated. The nature of the carbohydrate chain varies between cell types. In fibroblasts, the proenzyme contains a high mannose-type oligosaccharide, while the mature enzyme contains a complex-type oligosaccharide. In erythrocyte membranes, both the proenzyme and mature enzyme contain a complex-type oligosaccharide. In terms of processing, two forms are produced by autocatalytic cleavage, form I begins at Ile-54, form II begins at Thr-57. In terms of tissue distribution, expressed abundantly in the stomach, the Clara cells of the lung and activated B-lymphocytes, and at lower levels in lymph nodes, skin and spleen. Not expressed in resting B-lymphocytes.

The protein resides in the endosome. The enzyme catalyses Similar to cathepsin D, but slightly broader specificity.. In terms of biological role, may have a role in immune function. Probably involved in the processing of antigenic peptides during MHC class II-mediated antigen presentation. May play a role in activation-induced lymphocyte depletion in the thymus, and in neuronal degeneration and glial cell activation in the brain. In Homo sapiens (Human), this protein is Cathepsin E (CTSE).